Reading from the N-terminus, the 343-residue chain is Aspartate beta-hydroxylase domain-containing protein 2 (343 aa).

Topologically, residues 1–31 are cytoplasmic; sequence MWLEWLVAWSWSLDGLRDCIATGIQSVRDCD. The chain crosses the membrane as a helical span at residues 32-52; it reads GTAVITVACLLILFVWYCYHV. Residues 53 to 343 lie on the Lumenal side of the membrane; the sequence is GREQPRPHVS…ALDFIFAPGR (291 aa). N-linked (GlcNAc...) asparagine glycans are attached at residues N77 and N185. Residues W202 and S246 each coordinate 2-oxoglutarate. H257 is a Fe cation binding site. 266–268 contributes to the 2-oxoglutarate binding site; the sequence is RCH. H302 contacts Fe cation. Residue R315 participates in 2-oxoglutarate binding.

This sequence belongs to the aspartyl/asparaginyl beta-hydroxylase family. Fe cation serves as cofactor.

The protein localises to the membrane. Its function is as follows. May function as 2-oxoglutarate-dependent dioxygenase. In Mus musculus (Mouse), this protein is Aspartate beta-hydroxylase domain-containing protein 2 (Asphd2).